A 411-amino-acid polypeptide reads, in one-letter code: MGTCRESEPTQIFVPGPIIVGAGPSGLAVAACLSNRGVPSVILERTDCLASLWQKRTYDRLKLHLPKHFCELPLMPFPKNFPKYPSKQLFISYVESYAARFNIKPVFNQTVEKAEFDDASGLWNVKTQDGVYTSTWLVVATGENAEPVFPNIPGLKKFTGPVVHTSAYKSGSAFANRKVLVVGCGNSGMEVSLDLCRYNALPHMVVRNSVHVLPRDFFGLSTFGIAMTLLKWFPLKLVDKFLLLLANSTLGNTDLLGLRRPKTGPIELKNVTGKTPVLDVGAISLIRSGQIKVTQAVKEITRNGAKFLNGKEIEFDSIILATGYKSNVPDWLKENSFFTKEGMPKTPFPNGWKGEKGLYTVGFTRRGLSGTAYDAVKIAEDITDQWMKFNGPLSCRNICSSHIIHLHFNKS.

21–26 (GAGPSG) provides a ligand contact to FAD. 183–188 (GCGNSG) contacts NADP(+).

The protein belongs to the FMO family. The cofactor is FAD. Expressed in leaves, stems, flowers, buds and siliques. Detected in the apical gynoecium and in the developing ovules.

It localises to the cytoplasm. It is found in the endoplasmic reticulum membrane. The catalysed reaction is indole-3-pyruvate + NADPH + O2 + H(+) = (indol-3-yl)acetate + CO2 + NADP(+) + H2O. The protein operates within plant hormone metabolism; auxin biosynthesis. Functionally, involved in auxin biosynthesis. Both isoforms are catalitically active. Involved during embryogenesis and seedling development. Required for the formation of floral organs and vascular tissues. Belongs to the set of redundant YUCCA genes probably responsible for auxin biosynthesis in shoots. The chain is Probable indole-3-pyruvate monooxygenase YUCCA4 (YUC4) from Arabidopsis thaliana (Mouse-ear cress).